A 574-amino-acid polypeptide reads, in one-letter code: Sorting nexin-33 (574 aa).

Positions 1-61 constitute an SH3 domain; the sequence is MALKGRALYD…PASYVEIVRS (61 aa). The interval 68-119 is disordered; sequence ADYSSSPAGSPGAQVSLYNSPSVASPARSGGGSGFLSNQGSFEEDDDDDWDD. Residues Ser-77 and Ser-92 each carry the phosphoserine modification. A compositionally biased stretch (acidic residues) spans 109-119; sequence FEEDDDDDWDD. The PX domain maps to 230–340; the sequence is FACSVEDPTK…HFLSCLDDKQ (111 aa). One can recognise a BAR domain in the interval 371–574; it reads LQDVEDRVDT…EKTLRMYDNL (204 aa).

It belongs to the sorting nexin family. Homodimer (via BAR domain). Interacts with ADAM15. Interacts with FASLG. Interacts (via SH3 domain) with DNM1 and DNM2. Interacts with WASL. Interacts with FCHSD1 (via the F-BAR domain). Phosphorylated. As to expression, detected in heart and pancreas.

The protein resides in the cytoplasm. It is found in the cytosol. The protein localises to the membrane. Its subcellular location is the cytoplasmic vesicle membrane. Functionally, plays a role in the reorganization of the cytoskeleton, endocytosis and cellular vesicle trafficking via its interactions with membranes, WASL, DNM1 and DNM2. Acts both during interphase and at the end of mitotic cell divisions. Required for efficient progress through mitosis and cytokinesis. Required for normal formation of the cleavage furrow at the end of mitosis. Modulates endocytosis of cell-surface proteins, such as APP and PRNP; this then modulates the secretion of APP and PRNP peptides. Promotes membrane tubulation (in vitro). May promote the formation of macropinosomes. This Homo sapiens (Human) protein is Sorting nexin-33 (SNX33).